Here is a 320-residue protein sequence, read N- to C-terminus: Endochitinase (320 aa).

The first 23 residues, 1-23, serve as a signal peptide directing secretion; that stretch reads MKRTLKVSFFILCLLPLFLGSKA. One can recognise a Chitin-binding type-1 domain in the interval 24–64; that stretch reads EQCGSQAGGAVCPNGLCCSKFGFCGSTDPYCGDGCQSQCKS. Disulfide bonds link Cys-26–Cys-41, Cys-35–Cys-47, Cys-40–Cys-54, Cys-58–Cys-62, Cys-101–Cys-163, Cys-175–Cys-182, and Cys-281–Cys-313. Glu-145 acts as the Proton donor in catalysis.

This sequence belongs to the glycosyl hydrolase 19 family. Chitinase class I subfamily.

It carries out the reaction Random endo-hydrolysis of N-acetyl-beta-D-glucosaminide (1-&gt;4)-beta-linkages in chitin and chitodextrins.. Its function is as follows. Defense against chitin-containing fungal pathogens. The polypeptide is Endochitinase (Pisum sativum (Garden pea)).